The primary structure comprises 78 residues: UPF0291 protein Exig_1097 (78 aa).

Positions 57-78 (EEGTDVTPEKLKQAQEEERNKQ) are disordered. Over residues 63–78 (TPEKLKQAQEEERNKQ) the composition is skewed to basic and acidic residues.

Belongs to the UPF0291 family.

The protein resides in the cytoplasm. This chain is UPF0291 protein Exig_1097, found in Exiguobacterium sibiricum (strain DSM 17290 / CCUG 55495 / CIP 109462 / JCM 13490 / 255-15).